We begin with the raw amino-acid sequence, 493 residues long: ATP synthase subunit beta, chloroplastic (493 aa).

170-177 (GGAGVGKT) provides a ligand contact to ATP.

This sequence belongs to the ATPase alpha/beta chains family. In terms of assembly, F-type ATPases have 2 components, CF(1) - the catalytic core - and CF(0) - the membrane proton channel. CF(1) has five subunits: alpha(3), beta(3), gamma(1), delta(1), epsilon(1). CF(0) has four main subunits: a(1), b(1), b'(1) and c(9-12).

It is found in the plastid. The protein resides in the chloroplast thylakoid membrane. It catalyses the reaction ATP + H2O + 4 H(+)(in) = ADP + phosphate + 5 H(+)(out). Functionally, produces ATP from ADP in the presence of a proton gradient across the membrane. The catalytic sites are hosted primarily by the beta subunits. The polypeptide is ATP synthase subunit beta, chloroplastic (Lachenalia pusilla (Cape cowslips)).